The sequence spans 206 residues: Ribonuclease M5 (206 aa).

Residues 8–91 (NEVIVVEGRD…AFLNRDEARP (84 aa)) enclose the Toprim domain. Glu-14, Asp-60, and Asp-62 together coordinate Mg(2+).

The protein belongs to the ribonuclease M5 family. Mg(2+) is required as a cofactor.

The protein localises to the cytoplasm. It carries out the reaction Endonucleolytic cleavage of RNA, removing 21 and 42 nucleotides, respectively, from the 5'- and 3'-termini of a 5S-rRNA precursor.. Functionally, required for correct processing of both the 5' and 3' ends of 5S rRNA precursor. Cleaves both sides of a double-stranded region yielding mature 5S rRNA in one step. The sequence is that of Ribonuclease M5 from Lactococcus lactis subsp. lactis (strain IL1403) (Streptococcus lactis).